A 287-amino-acid chain; its full sequence is ATP synthase subunit a (287 aa).

6 consecutive transmembrane segments (helical) span residues 37-57 (LDSVAVSVILGVLGLFVMWLA), 96-116 (FIAPLALTVFVWIFLMNAMDL), 149-169 (LGLSSAVLILCFVYSIKIKGL), 187-207 (PVFALILGVVNLLMQIIEYVA), 224-244 (ELVFMLIALMGGAAAMSLSGV), and 266-286 (TLQAFIFMMLTLIYLGQAHEA).

The protein belongs to the ATPase A chain family. F-type ATPases have 2 components, CF(1) - the catalytic core - and CF(0) - the membrane proton channel. CF(1) has five subunits: alpha(3), beta(3), gamma(1), delta(1), epsilon(1). CF(0) has three main subunits: a(1), b(2) and c(9-12). The alpha and beta chains form an alternating ring which encloses part of the gamma chain. CF(1) is attached to CF(0) by a central stalk formed by the gamma and epsilon chains, while a peripheral stalk is formed by the delta and b chains.

It is found in the cell inner membrane. Key component of the proton channel; it plays a direct role in the translocation of protons across the membrane. In Acidovorax sp. (strain JS42), this protein is ATP synthase subunit a.